The following is a 340-amino-acid chain: Chorismate mutase 1, chloroplastic (340 aa).

A chloroplast-targeting transit peptide spans 1–65 (MEASLLMRSS…KPRSGTSSVH (65 aa)). Alanine 66 is modified (N-acetylalanine). Arginine 79 contributes to the L-phenylalanine binding site. Residues 79–340 (RVDESESLTL…QVEYLLRRLD (262 aa)) form the Chorismate mutase domain. L-tyrosine is bound by residues arginine 150 and 211–214 (NYGS). 211–214 (NYGS) is a binding site for L-phenylalanine.

Homodimer. Expressed in roots, shoots, rosette leaves, stems, cauline leaves, flowers and siliques.

The protein localises to the plastid. The protein resides in the chloroplast. It catalyses the reaction chorismate = prephenate. It participates in metabolic intermediate biosynthesis; prephenate biosynthesis; prephenate from chorismate: step 1/1. With respect to regulation, allosterically inhibited by tyrosine and phenylalanine. Activated by tryptophan. Its function is as follows. May play a role in chloroplast biogenesis. The polypeptide is Chorismate mutase 1, chloroplastic (Arabidopsis thaliana (Mouse-ear cress)).